The following is a 334-amino-acid chain: Glycerol-3-phosphate dehydrogenase [NAD(P)+] 2 (334 aa).

The NADPH site is built by Trp16, Arg36, Arg37, and Lys110. Sn-glycerol 3-phosphate contacts are provided by Lys110 and Gly140. Ala144 contributes to the NADPH binding site. Positions 195, 248, 258, 259, and 260 each coordinate sn-glycerol 3-phosphate. Lys195 (proton acceptor) is an active-site residue. An NADPH-binding site is contributed by Arg259. Residues Val282 and Glu284 each coordinate NADPH.

This sequence belongs to the NAD-dependent glycerol-3-phosphate dehydrogenase family.

Its subcellular location is the cytoplasm. The enzyme catalyses sn-glycerol 3-phosphate + NAD(+) = dihydroxyacetone phosphate + NADH + H(+). It carries out the reaction sn-glycerol 3-phosphate + NADP(+) = dihydroxyacetone phosphate + NADPH + H(+). It participates in membrane lipid metabolism; glycerophospholipid metabolism. Functionally, catalyzes the reduction of the glycolytic intermediate dihydroxyacetone phosphate (DHAP) to sn-glycerol 3-phosphate (G3P), the key precursor for phospholipid synthesis. This is Glycerol-3-phosphate dehydrogenase [NAD(P)+] 2 from Mycobacterium tuberculosis (strain ATCC 25618 / H37Rv).